The following is a 310-amino-acid chain: Protoheme IX farnesyltransferase (310 aa).

The next 8 helical transmembrane spans lie at 31–51 (VIEL…RGSV), 53–73 (PLLI…ANTL), 102–122 (NALI…WGTS), 124–144 (LLSG…YTLL), 149–169 (TSQN…IGWS), 170–190 (AVTG…FFWT), 242–262 (LATG…FLVM), and 289–309 (LAVV…TLLG).

Belongs to the UbiA prenyltransferase family. Protoheme IX farnesyltransferase subfamily.

It is found in the cell membrane. It carries out the reaction heme b + (2E,6E)-farnesyl diphosphate + H2O = Fe(II)-heme o + diphosphate. It functions in the pathway porphyrin-containing compound metabolism; heme O biosynthesis; heme O from protoheme: step 1/1. Converts heme B (protoheme IX) to heme O by substitution of the vinyl group on carbon 2 of heme B porphyrin ring with a hydroxyethyl farnesyl side group. The polypeptide is Protoheme IX farnesyltransferase (Mycobacterium sp. (strain JLS)).